The primary structure comprises 588 residues: DNA ligase (588 aa).

E250 provides a ligand contact to ATP. The active-site N6-AMP-lysine intermediate is K252. ATP contacts are provided by R257, R272, E302, F342, R417, and K423.

The protein belongs to the ATP-dependent DNA ligase family. It depends on Mg(2+) as a cofactor.

The enzyme catalyses ATP + (deoxyribonucleotide)n-3'-hydroxyl + 5'-phospho-(deoxyribonucleotide)m = (deoxyribonucleotide)n+m + AMP + diphosphate.. In terms of biological role, DNA ligase that seals nicks in double-stranded DNA during DNA replication, DNA recombination and DNA repair. The chain is DNA ligase from Nitrosopumilus maritimus (strain SCM1).